Consider the following 661-residue polypeptide: Putative lipase ATG15 (661 aa).

The Cytoplasmic portion of the chain corresponds to 1–3 (MIW). A helical; Signal-anchor for type II membrane protein membrane pass occupies residues 4-24 (NGRLVLACVLLIAGCSGQVDA). Residues 25–661 (ARTREQRKAF…FDDFDPKNDL (637 aa)) are Lumenal-facing. Asn155, Asn190, Asn212, Asn271, and Asn295 each carry an N-linked (GlcNAc...) asparagine glycan. Ser311 functions as the Charge relay system in the catalytic mechanism. An N-linked (GlcNAc...) asparagine glycan is attached at Asn457. Disordered stretches follow at residues 492–559 (ESTT…TSTS) and 574–597 (TTTS…TTTS). 3 stretches are compositionally biased toward low complexity: residues 493–513 (STTS…STRT), 527–559 (TTTS…TSTS), and 574–595 (TTTS…TKTT).

Belongs to the AB hydrolase superfamily. Lipase family. Binds to both phosphatidylinositol (PI) and phosphatidylinositol 3,5-bisphosphate (PIP2).

It localises to the endosome. The protein resides in the multivesicular body membrane. The protein localises to the prevacuolar compartment membrane. It catalyses the reaction a triacylglycerol + H2O = a diacylglycerol + a fatty acid + H(+). Lipase which is essential for lysis of subvacuolar cytoplasm to vacuole targeted bodies and intravacuolar autophagic bodies. Involved in the lysis of intravacuolar multivesicular body (MVB) vesicles. The intravacuolar membrane disintegration by ATG15 is critical to life span extension. The polypeptide is Putative lipase ATG15 (ATG15) (Passalora fulva (Tomato leaf mold)).